Consider the following 1828-residue polypeptide: AT-rich interactive domain-containing protein 2 (1828 aa).

At Ala2 the chain carries N-acetylalanine. Ser4 carries the phosphoserine modification. Residues Lys7, Lys15, and Lys119 each participate in a glycyl lysine isopeptide (Lys-Gly) (interchain with G-Cter in SUMO2) cross-link. The ARID domain maps to Arg13–His105. An LXXLL motif is present at residues Leu313–Leu317. A DNA-binding region (RFX-type winged-helix) is located at residues Ala524–Ala603. Residue Lys555 forms a Glycyl lysine isopeptide (Lys-Gly) (interchain with G-Cter in SUMO2) linkage. Ser631 and Ser635 each carry phosphoserine. A Phosphothreonine modification is found at Thr653. A Phosphoserine modification is found at Ser689. Thr692 carries the post-translational modification Phosphothreonine. Disordered regions lie at residues Thr824 to Gln843, Leu962 to Val1028, Lys1245 to Asp1339, Lys1360 to Val1462, His1483 to Thr1503, and Ser1566 to Pro1618. The segment covering Ala987–Arg1011 has biased composition (polar residues). A compositionally biased stretch (low complexity) spans Gln1012–Val1028. A compositionally biased stretch (basic and acidic residues) spans Lys1245–Val1259. The span at Arg1267–Gln1283 shows a compositional bias: polar residues. Position 1294 is a phosphoserine (Ser1294). Composition is skewed to polar residues over residues Asp1295–Pro1320 and Leu1366–Val1379. Ser1385 is modified (phosphoserine). Polar residues-rich tracts occupy residues Gln1390–Thr1400 and Gly1419–Glu1428. The segment covering Ser1453–Val1462 has biased composition (low complexity). Ser1491 carries the post-translational modification Phosphoserine. 2 stretches are compositionally biased toward polar residues: residues Ser1491–Thr1503 and Ala1567–Asn1586. The segment covering Ala1594–Gln1614 has biased composition (low complexity). A C2H2-type zinc finger spans residues Phe1626–His1651. Residues Lys1695, Lys1710, and Lys1725 each participate in a glycyl lysine isopeptide (Lys-Gly) (interchain with G-Cter in SUMO2) cross-link. The interval Asp1697–Ala1726 is disordered. Residues Val1702–Val1714 are compositionally biased toward polar residues.

It belongs to the RFX family. Component of the SWI/SNF-B (PBAF) chromatin remodeling complex, at least composed of SMARCA4/BRG1, SMARCB1/BAF47/SNF5, ACTL6A/BAF53A or ACTL6B/BAF53B, SMARCE1/BAF57, SMARCD1/BAF60A, SMARCD2/BAF60B, perhaps SMARCD3/BAF60C, SMARCC1/BAF155, SMARCC2/BAF170, PBRM1/BAF180, ARID2/BAF200 and actin. Interacts with SRF. Forms complexes with SRF and SRF cofactors MYOCD, NKX2-5 and SRFBP1. In terms of tissue distribution, highly expressed in testis, expressed in heart, liver and kidney.

The protein localises to the nucleus. Its function is as follows. Involved in transcriptional activation and repression of select genes by chromatin remodeling (alteration of DNA-nucleosome topology). Required for the stability of the SWI/SNF chromatin remodeling complex SWI/SNF-B (PBAF). May be involved in targeting the complex to different genes. May be involved in regulating transcriptional activation of cardiac genes. The chain is AT-rich interactive domain-containing protein 2 from Mus musculus (Mouse).